We begin with the raw amino-acid sequence, 374 residues long: Regulator of G-protein signaling 20 (374 aa).

The span at 1-11 (MPRLSQDNQQG) shows a compositional bias: polar residues. 2 disordered regions span residues 1–21 (MPRLSQDNQQGHQKHFSRPSR) and 135–158 (PPGGRLPREVDASAGQSSSIPPMG). The segment covering 12–21 (HQKHFSRPSR) has biased composition (basic residues). In terms of domain architecture, RGS spans 248 to 364 (SFDKLMLTPA…MNSALYKDLL (117 aa)).

In terms of assembly, forms a complex with G(alpha)z/i2 subunits and mu-opioid receptors; the formation of this complex results in mu-opioid receptor desensitization. Interacts with OPRM1. Post-translationally, fatty acylated. Heavily palmitoylated in the cysteine string motif. In terms of processing, N- and O-glycosylated in synapsomal membranes. Serine phosphorylated in synapsomal membranes. Post-translationally, sumoylated with SUMO1 and SUMO2 in synaptosomes. The sumoylated forms act as a scaffold for sequestering mu-opioid receptor-activated G(alpha) subunits. Retinal-specific. Expressed throughout the retina, including photoreceptors.

It localises to the membrane. The protein resides in the nucleus. The protein localises to the cytoplasm. In terms of biological role, inhibits signal transduction by increasing the GTPase activity of G protein alpha subunits thereby driving them into their inactive GDP-bound form. Binds selectively to G(z)-alpha and G(alpha)-i2 subunits, accelerates their GTPase activity and regulates their signaling activities. The G(z)-alpha activity is inhibited by the phosphorylation and palmitoylation of the G-protein. Negatively regulates mu-opioid receptor-mediated activation of the G-proteins. The protein is Regulator of G-protein signaling 20 (RGS20) of Bos taurus (Bovine).